The sequence spans 1017 residues: Semaphorin-6D (1017 aa).

The first 20 residues, 1 to 20 (MRVFLLCAYILLLMISQLRA), serve as a signal peptide directing secretion. The Extracellular portion of the chain corresponds to 21–606 (VSFPEDDEPL…GESNQMVHMN (586 aa)). The 486-residue stretch at 27–512 (DEPLNTVDYH…FSSCVIRIPL (486 aa)) folds into the Sema domain. The N-linked (GlcNAc...) asparagine glycan is linked to Asn51. 4 cysteine pairs are disulfide-bonded: Cys108–Cys118, Cys136–Cys145, Cys259–Cys370, and Cys284–Cys329. Asn283 is a glycosylation site (N-linked (GlcNAc...) asparagine). Asn435 and Asn461 each carry an N-linked (GlcNAc...) asparagine glycan. Intrachain disulfides connect Cys477/Cys506, Cys515/Cys533, Cys521/Cys568, and Cys525/Cys541. Residues 514 to 569 (RCERYGSCKKSCIASRDPYCGWLSQGSCGRVTPGMLAEGYEQDAEFGNTAHLGDCH) form the PSI domain. A helical transmembrane segment spans residues 607–627 (VLITCVFAAFVLGAFIAGVAV). The Cytoplasmic segment spans residues 628 to 1017 (YCYRDMFVRK…SVRPLNKYTY (390 aa)). Ser667, Ser678, and Ser688 each carry phosphoserine. Disordered regions lie at residues 688-719 (SRKE…PTPE), 731-769 (AMKS…GHIP), 783-818 (TSFS…RSVD), and 873-912 (LYSP…HKNS). Phosphothreonine is present on Thr717. A compositionally biased stretch (basic and acidic residues) spans 734–749 (SHSEKAHGHGASRKET). A phosphoserine mark is found at Ser875, Ser901, and Ser927. Positions 875 to 886 (SPPSTLPRNSPT) are enriched in polar residues. The span at 965–981 (LQPSLSRQSSYTSNGTL) shows a compositional bias: polar residues. The disordered stretch occupies residues 965–1017 (LQPSLSRQSSYTSNGTLPRTGLKRTPSLKPDVPPKPSFVPQTPSVRPLNKYTY).

Belongs to the semaphorin family.

The protein resides in the cell membrane. Its function is as follows. Shows growth cone collapsing activity on dorsal root ganglion (DRG) neurons in vitro. May be a stop signal for the DRG neurons in their target areas, and possibly also for other neurons. May also be involved in the maintenance and remodeling of neuronal connections. Ligand of TREM2 with PLXNA1 as coreceptor in dendritic cells, plays a role in the generation of immune responses and skeletal homeostasis. This is Semaphorin-6D (SEMA6D) from Pongo abelii (Sumatran orangutan).